Consider the following 950-residue polypeptide: RNA polymerase-associated protein RapA (950 aa).

Residues 165-333 (EVADRMAPRV…FARLRLLDPN (169 aa)) form the Helicase ATP-binding domain. 178-185 (DEVGLGKT) lines the ATP pocket. Positions 279-282 (DEAH) match the DEAH box motif. One can recognise a Helicase C-terminal domain in the interval 475 to 629 (RVEWLIDTLK…TCPTGNALQH (155 aa)).

The protein belongs to the SNF2/RAD54 helicase family. RapA subfamily. In terms of assembly, interacts with the RNAP. Has a higher affinity for the core RNAP than for the holoenzyme. Its ATPase activity is stimulated by binding to RNAP.

Functionally, transcription regulator that activates transcription by stimulating RNA polymerase (RNAP) recycling in case of stress conditions such as supercoiled DNA or high salt concentrations. Probably acts by releasing the RNAP, when it is trapped or immobilized on tightly supercoiled DNA. Does not activate transcription on linear DNA. Probably not involved in DNA repair. This is RNA polymerase-associated protein RapA from Pseudomonas aeruginosa (strain LESB58).